The sequence spans 216 residues: 3-isopropylmalate dehydratase small subunit (216 aa).

The protein belongs to the LeuD family. LeuD type 1 subfamily. Heterodimer of LeuC and LeuD.

The enzyme catalyses (2R,3S)-3-isopropylmalate = (2S)-2-isopropylmalate. The protein operates within amino-acid biosynthesis; L-leucine biosynthesis; L-leucine from 3-methyl-2-oxobutanoate: step 2/4. Functionally, catalyzes the isomerization between 2-isopropylmalate and 3-isopropylmalate, via the formation of 2-isopropylmaleate. In Burkholderia mallei (strain NCTC 10247), this protein is 3-isopropylmalate dehydratase small subunit.